Here is a 254-residue protein sequence, read N- to C-terminus: 3-deoxy-manno-octulosonate cytidylyltransferase (254 aa).

It belongs to the KdsB family.

It localises to the cytoplasm. The enzyme catalyses 3-deoxy-alpha-D-manno-oct-2-ulosonate + CTP = CMP-3-deoxy-beta-D-manno-octulosonate + diphosphate. It functions in the pathway nucleotide-sugar biosynthesis; CMP-3-deoxy-D-manno-octulosonate biosynthesis; CMP-3-deoxy-D-manno-octulosonate from 3-deoxy-D-manno-octulosonate and CTP: step 1/1. Its pathway is bacterial outer membrane biogenesis; lipopolysaccharide biosynthesis. Functionally, activates KDO (a required 8-carbon sugar) for incorporation into bacterial lipopolysaccharide in Gram-negative bacteria. This is 3-deoxy-manno-octulosonate cytidylyltransferase from Pseudomonas putida (strain GB-1).